The sequence spans 55 residues: Large ribosomal subunit protein bL33 (55 aa).

The protein belongs to the bacterial ribosomal protein bL33 family.

In Bordetella pertussis (strain Tohama I / ATCC BAA-589 / NCTC 13251), this protein is Large ribosomal subunit protein bL33.